A 160-amino-acid chain; its full sequence is Phosphopantetheine adenylyltransferase (160 aa).

T10 is a binding site for substrate. ATP is bound by residues 10-11 and H18; that span reads TF. Substrate is bound by residues K42, L74, and R88. ATP is bound by residues 89–91, E99, and 124–130; these read GLR and NSFISST.

This sequence belongs to the bacterial CoaD family. Homohexamer. Mg(2+) is required as a cofactor.

It localises to the cytoplasm. It carries out the reaction (R)-4'-phosphopantetheine + ATP + H(+) = 3'-dephospho-CoA + diphosphate. The protein operates within cofactor biosynthesis; coenzyme A biosynthesis; CoA from (R)-pantothenate: step 4/5. Its function is as follows. Reversibly transfers an adenylyl group from ATP to 4'-phosphopantetheine, yielding dephospho-CoA (dPCoA) and pyrophosphate. The protein is Phosphopantetheine adenylyltransferase of Aeromonas salmonicida (strain A449).